We begin with the raw amino-acid sequence, 509 residues long: DNA nucleotidylexotransferase (509 aa).

The interval 1 to 25 is disordered; that stretch reads MDPLCTASSGPRKKRPRQVGASMAS. Positions 11–17 match the Nuclear localization signal motif; it reads PRKKRPR. Residues 27-124 form the BRCT domain; the sequence is PHDIKFQNLV…KPVEITGKHQ (98 aa). The tract at residues 151–509 is mediates interaction with DNTTIP2; the sequence is SQYACQRKTT…DYIEPWERNA (359 aa). Residues 258 to 262 form an involved in DNA binding region; it reads VGLKT. A 2'-deoxyribonucleoside 5'-triphosphate contacts are provided by residues 333–338 and 342–345; these read GFRRGK and HDVD. Mg(2+) contacts are provided by Asp343, Asp345, and Asp433. Position 448 to 449 (448 to 449) interacts with a 2'-deoxyribonucleoside 5'-triphosphate; it reads GW.

This sequence belongs to the DNA polymerase type-X family. Interacts with PRP19 and DNTTIP1. Forms a ternary complex with DNTTIP2 and core histone. Released from this complex by PCNA. Interacts with TRERF1. Mg(2+) serves as cofactor.

The protein localises to the nucleus. The enzyme catalyses DNA(n) + a 2'-deoxyribonucleoside 5'-triphosphate = DNA(n+1) + diphosphate. Functionally, template-independent DNA polymerase which catalyzes the random addition of deoxynucleoside 5'-triphosphate to the 3'-end of a DNA initiator. One of the in vivo functions of this enzyme is the addition of nucleotides at the junction (N region) of rearranged Ig heavy chain and T-cell receptor gene segments during the maturation of B- and T-cells. The polypeptide is DNA nucleotidylexotransferase (DNTT) (Bos taurus (Bovine)).